We begin with the raw amino-acid sequence, 555 residues long: AP2-like ethylene-responsive transcription factor ANT (555 aa).

Disordered stretches follow at residues 34-56 and 199-231; these read GGRE…SVPP and LSMS…NHQQ. 3 stretches are compositionally biased toward low complexity: residues 41–53, 199–208, and 218–231; these read SSST…SSSS, LSMSPGSQSS, and QNQN…NHQQ. 2 consecutive DNA-binding regions (AP2/ERF) follow at residues 283 to 349 and 385 to 443; these read QYRG…TNFS and IYRG…TNFD.

Belongs to the AP2/ERF transcription factor family. AP2 subfamily. As to quaternary structure, interacts with ANL2, HDG2 and HDG10, and possibly with GL2, HDG3, HDG8, ATML1 and PDF2. As to expression, mostly expressed in developing flowers. Also present in mature flowers, siliques and seedlings, but not in mature roots, leaves and stems. Expressed in ovules and in vegetative and floral primordia.

It is found in the nucleus. Transcription activator that recognizes and binds to the DNA consensus sequence 5'-CAC[AG]N[AT]TNCCNANG-3'. Required for the initiation and growth of ovules integumenta, and for the development of female gametophyte. Plays a critical role in the development of gynoecium marginal tissues (e.g. stigma, style and septa), and in the fusion of carpels and of medial ridges leading to ovule primordia. Also involved in organs initiation and development, including floral organs. Maintains the meristematic competence of cells and consequently sustains expression of cell cycle regulators during organogenesis, thus controlling the final size of each organ by controlling their cell number. Regulates INO autoinduction and expression pattern. As ANT promotes petal cell identity and mediates down-regulation of AG in flower whorl 2, it functions as a class A homeotic gene. The protein is AP2-like ethylene-responsive transcription factor ANT of Arabidopsis thaliana (Mouse-ear cress).